The chain runs to 127 residues: Large ribosomal subunit protein bL17 (127 aa).

Belongs to the bacterial ribosomal protein bL17 family. In terms of assembly, part of the 50S ribosomal subunit. Contacts protein L32.

The protein is Large ribosomal subunit protein bL17 of Enterococcus faecalis (strain ATCC 700802 / V583).